The following is an 87-amino-acid chain: Probable Fe(2+)-trafficking protein (87 aa).

It belongs to the Fe(2+)-trafficking protein family.

In terms of biological role, could be a mediator in iron transactions between iron acquisition and iron-requiring processes, such as synthesis and/or repair of Fe-S clusters in biosynthetic enzymes. The protein is Probable Fe(2+)-trafficking protein of Francisella philomiragia subsp. philomiragia (strain ATCC 25017 / CCUG 19701 / FSC 153 / O#319-036).